We begin with the raw amino-acid sequence, 435 residues long: Asparagine--tRNA ligase (435 aa).

This sequence belongs to the class-II aminoacyl-tRNA synthetase family. In terms of assembly, homodimer.

The protein resides in the cytoplasm. It carries out the reaction tRNA(Asn) + L-asparagine + ATP = L-asparaginyl-tRNA(Asn) + AMP + diphosphate + H(+). The chain is Asparagine--tRNA ligase from Leptospira borgpetersenii serovar Hardjo-bovis (strain JB197).